The chain runs to 501 residues: Sarpagan bridge enzyme (501 aa).

The helical; Signal-anchor for type II membrane protein transmembrane segment at 3–23 (VMQLSFSYPALFLFVFFLFML) threads the bilayer. Cysteine 441 lines the heme pocket.

Belongs to the cytochrome P450 family. It depends on heme as a cofactor. As to expression, highly expressed in roots. Expressed at low levels in stems.

It is found in the endoplasmic reticulum membrane. It catalyses the reaction (19E)-geissoschizine + reduced [NADPH--hemoprotein reductase] + O2 = polyneuridine aldehyde + oxidized [NADPH--hemoprotein reductase] + 2 H2O + H(+). It carries out the reaction tetrahydroalstonine + A + reduced [NADPH--hemoprotein reductase] + O2 = alstonine + AH2 + oxidized [NADPH--hemoprotein reductase] + 2 H2O + H(+). The enzyme catalyses ajmalicine + A + reduced [NADPH--hemoprotein reductase] + O2 = serpentine + AH2 + oxidized [NADPH--hemoprotein reductase] + 2 H2O + H(+). Its pathway is alkaloid biosynthesis; ajmaline biosynthesis. Monooxygenase involved in the biosynthesis of ajmaline-type monoterpenoid indole alkaloids (MIAs) natural products, important plant-derived pharmaceuticals used in the therapy of heart disorders. Converts by cyclization the strictosidine-derived geissoschizine to the sarpagan alkaloid polyneuridine aldehyde, precursor of vomilenine, an intermediate chemical in the biosynthesis of ajmaline. Converts by aromatization the tetrahydro-beta-carboline alkaloids tetrahydroalstonine and ajmalicine to the corresponding beta-carboline alkaloids alstonine and serpentine, respectively. This Gelsemium sempervirens (Carolina jasmine) protein is Sarpagan bridge enzyme.